An 86-amino-acid polypeptide reads, in one-letter code: U15-lycotoxin-Ls1d (86 aa).

Positions 1-20 (MNSKIFAVLLLLGLLSCVLS) are cleaved as a signal peptide. The 46-residue stretch at 21 to 66 (DQYCPKSSITACKKMNIRNDCCKDDDCTGGSWCCATPCGNFCKYPT) folds into the WAP domain. 5 cysteine pairs are disulfide-bonded: Cys24–Cys54, Cys32–Cys58, Cys41–Cys53, Cys42–Cys80, and Cys47–Cys62.

It belongs to the venom protein 11 family. 01 (wap-1) subfamily. In terms of processing, contains 5 disulfide bonds. In terms of tissue distribution, expressed by the venom gland.

Its subcellular location is the secreted. Has antibacterial activity. This is U15-lycotoxin-Ls1d from Lycosa singoriensis (Wolf spider).